An 820-amino-acid polypeptide reads, in one-letter code: Ribosome biogenesis protein ERB1 (820 aa).

A disordered region spans residues 1–111; sequence MVRSRSNSVK…SDAGDDEVDP (111 aa). Basic and acidic residues predominate over residues 9–19; that stretch reads VKKDLKRKVDE. The span at 20 to 48 shows a compositional bias: acidic residues; the sequence is PVDVQDEFDVEGLIDEGDSDDEDEAEQEV. Residues 53 to 64 are compositionally biased toward basic and acidic residues; sequence VTKDKKNTSKTE. Over residues 65–110 the composition is skewed to acidic residues; sequence NEEDADDESDSDAELEALIGEEEDLSGSELEDELAYFSDAGDDEVD. The required for interaction with NOP7 stretch occupies residues 282 to 395; sequence RFIPSKHEAK…LRHVPGYSES (114 aa). Residues 395–431 form a required for interaction with YTM1 region; the sequence is SVRERFERSLDLYLAPRVRKNKLNIDPDSLIPDLPSP. WD repeat units lie at residues 447–486 and 495–535; these read GHKG…ELYR and AQDD…FDIE. Residues 545-585 form a disordered region; that stretch reads GWGFAEGGREQQDIDTKGLDDDADSDSDDETGHVKKKSPPA. Positions 551–564 are enriched in basic and acidic residues; sequence GGREQQDIDTKGLD. WD repeat units follow at residues 604–646, 649–687, 690–729, 733–773, and 789–820; these read TATK…SQSP, KSKG…MAKK, PGAR…KPYK, YHEK…DMMT, and KSGL…LWTT.

This sequence belongs to the WD repeat BOP1/ERB1 family. Component of the NOP7 complex, composed of ERB1, NOP7 and YTM1. The complex is held together by ERB1, which interacts with NOP7 via its N-terminal domain and with YTM1 via a high-affinity interaction between the seven-bladed beta-propeller domains of the 2 proteins. The NOP7 complex associates with the 66S pre-ribosome.

Its subcellular location is the nucleus. The protein localises to the nucleolus. It is found in the nucleoplasm. In terms of biological role, component of the NOP7 complex, which is required for maturation of the 25S and 5.8S ribosomal RNAs and formation of the 60S ribosome. The polypeptide is Ribosome biogenesis protein ERB1 (Yarrowia lipolytica (strain CLIB 122 / E 150) (Yeast)).